An 834-amino-acid polypeptide reads, in one-letter code: ABC transporter A family member 11 (834 aa).

The next 7 membrane-spanning stretches (helical) occupy residues 35–55, 188–208, 235–255, 269–289, 297–319, 324–346, and 355–375; these read FFIL…ILNN, MPMI…ILIV, VFDY…LYSF, FLLF…LQFI, NKWL…SVAF, PLIV…LKAL, and SYTI…IYFI. One can recognise an ABC transporter domain in the interval 452–693; that stretch reads LDKPSIIERC…YGSGYTIDII (242 aa). 495 to 502 is a binding site for ATP; sequence GPNGSGKS. Residues 779 to 789 show a composition bias toward polar residues; the sequence is KQQTNNKSNII. Positions 779-834 are disordered; the sequence is KQQTNNKSNIINNNNNNNNNNNNNNNNNNNNNNNNNNNNNNNNNTNNNTNNNQLIN. Over residues 790 to 834 the composition is skewed to low complexity; that stretch reads NNNNNNNNNNNNNNNNNNNNNNNNNNNNNNNNNTNNNTNNNQLIN.

Belongs to the ABC transporter superfamily. ABCA family.

It localises to the membrane. This is ABC transporter A family member 11 (abcA11) from Dictyostelium discoideum (Social amoeba).